Consider the following 149-residue polypeptide: Prefoldin subunit alpha (149 aa).

The protein belongs to the prefoldin subunit alpha family. Heterohexamer of two alpha and four beta subunits.

The protein localises to the cytoplasm. Its function is as follows. Molecular chaperone capable of stabilizing a range of proteins. Seems to fulfill an ATP-independent, HSP70-like function in archaeal de novo protein folding. The chain is Prefoldin subunit alpha from Methanospirillum hungatei JF-1 (strain ATCC 27890 / DSM 864 / NBRC 100397 / JF-1).